We begin with the raw amino-acid sequence, 153 residues long: UPF0260 protein YcgN (153 aa).

The protein belongs to the UPF0260 family.

This is UPF0260 protein YcgN from Salmonella paratyphi B (strain ATCC BAA-1250 / SPB7).